The following is a 457-amino-acid chain: Cysteine--tRNA ligase (457 aa).

Cysteine 27 serves as a coordination point for Zn(2+). The 'HIGH' region signature appears at 29–39 (ITPQSEPHIGH). Zn(2+) is bound by residues cysteine 207, histidine 232, and glutamate 236. A 'KMSKS' region motif is present at residues 265-269 (KMSKS). Residue lysine 268 participates in ATP binding.

The protein belongs to the class-I aminoacyl-tRNA synthetase family. In terms of assembly, monomer. Zn(2+) serves as cofactor.

It localises to the cytoplasm. It carries out the reaction tRNA(Cys) + L-cysteine + ATP = L-cysteinyl-tRNA(Cys) + AMP + diphosphate. The chain is Cysteine--tRNA ligase from Dehalococcoides mccartyi (strain ATCC BAA-2100 / JCM 16839 / KCTC 5957 / BAV1).